We begin with the raw amino-acid sequence, 219 residues long: Adenylate kinase (219 aa).

An ATP-binding site is contributed by 10 to 15; the sequence is GAGKGT. The segment at 30 to 59 is NMP; it reads STGDMLRAAVKAGTPLGQQAKKIMDEGGLV. Residues T31, R36, 57–59, 85–88, and Q92 each bind AMP; these read GLV and GFPR. An LID region spans residues 122 to 159; it reads GRRVHPGSGRVYHVTHNPPRQEGKDDVTGEDLVQREDD. ATP is bound by residues R123 and 132–133; that span reads VY. The segment at 128–150 is disordered; it reads GSGRVYHVTHNPPRQEGKDDVTG. A compositionally biased stretch (basic and acidic residues) spans 140–150; sequence PRQEGKDDVTG. AMP contacts are provided by R156 and R167. Residue R203 coordinates ATP.

This sequence belongs to the adenylate kinase family. In terms of assembly, monomer.

The protein resides in the cytoplasm. The enzyme catalyses AMP + ATP = 2 ADP. Its pathway is purine metabolism; AMP biosynthesis via salvage pathway; AMP from ADP: step 1/1. In terms of biological role, catalyzes the reversible transfer of the terminal phosphate group between ATP and AMP. Plays an important role in cellular energy homeostasis and in adenine nucleotide metabolism. The polypeptide is Adenylate kinase (Halorhodospira halophila (strain DSM 244 / SL1) (Ectothiorhodospira halophila (strain DSM 244 / SL1))).